The primary structure comprises 352 residues: Rhodopsin (352 aa).

Residues 1-36 (MNGTEGPYFYVPMSNATGVVRSPYEYPQYYLAPPWA) lie on the Extracellular side of the membrane. 2 N-linked (GlcNAc...) asparagine glycosylation sites follow: N2 and N15. Residues 37-61 (YACLAAYMFFLILVGFPVNFLTLYV) traverse the membrane as a helical segment. Residues 62–73 (TIEHKKLRTPLN) are Cytoplasmic-facing. A helical transmembrane segment spans residues 74–96 (YILLNLAVADLFMVFGGFTTTMY). The Extracellular segment spans residues 97–110 (TSLNGYFVFGRLGC). C110 and C187 form a disulfide bridge. Residues 111–133 (NLEGFFATFGGINSLWCLVVLSI) form a helical membrane-spanning segment. The 'Ionic lock' involved in activated form stabilization signature appears at 134–136 (ERW). The Cytoplasmic segment spans residues 134-152 (ERWVVVCKPMSNFRFGENH). Residues 153–173 (AIMGVAFTWFMALACTVPPLV) traverse the membrane as a helical segment. Residues 174–202 (GWSRYIPEGMQCSCGIDYYTRAEGFNNES) lie on the Extracellular side of the membrane. A helical transmembrane segment spans residues 203–224 (FVIYMFVVHFLTPLFVITFCYG). Residues 225–252 (RLVCTVKEAAAQQQESETTQRAEREVTR) lie on the Cytoplasmic side of the membrane. Residues 253–274 (MVILMFIAYLVCWLPYASVSWW) traverse the membrane as a helical segment. Residues 275 to 286 (IFTNQGSEFGPI) lie on the Extracellular side of the membrane. A helical membrane pass occupies residues 287-308 (FMTVPAFFAKSSSIYNPVIYIC). Residue K296 is modified to N6-(retinylidene)lysine. The Cytoplasmic portion of the chain corresponds to 309–352 (LNKQFRHCMITTLCCGKNPFEEEEGASTTASKTEASSVSSVSPA). Residues C322 and C323 are each lipidated (S-palmitoyl cysteine). Positions 331–352 (EEGASTTASKTEASSVSSVSPA) are disordered. Positions 334–352 (ASTTASKTEASSVSSVSPA) are enriched in low complexity.

It belongs to the G-protein coupled receptor 1 family. Opsin subfamily. In terms of processing, phosphorylated on some or all of the serine and threonine residues present in the C-terminal region. Contains one covalently linked retinal chromophore.

It is found in the membrane. The protein localises to the cell projection. Its subcellular location is the cilium. The protein resides in the photoreceptor outer segment. Photoreceptor required for image-forming vision at low light intensity. While most salt water fish species use retinal as chromophore, most freshwater fish use 3-dehydroretinal, or a mixture of retinal and 3-dehydroretinal. Light-induced isomerization of 11-cis to all-trans retinal triggers a conformational change that activates signaling via G-proteins. Subsequent receptor phosphorylation mediates displacement of the bound G-protein alpha subunit by arrestin and terminates signaling. The protein is Rhodopsin (rho) of Psalidodon fasciatus (Banded astyanax).